Consider the following 261-residue polypeptide: uncharacterized protein (261 aa).

This is an uncharacterized protein from Bacillus subtilis (strain 168).